The sequence spans 247 residues: MTAIDLNADLGEGCDNDEALLALVSSANIACGWHAGDVNTMRQTTAWALRQGVSIGAHPSFPDRENFGRTEMHLPPDEVYAGVLFQIGGLSAIVRAQGGRLAHVKPHGALYNQAARDRPLAMAIARAVRDFDASLAVFGLAGGELVLAARELGLAAKEEVFADRGYNADGTLVKRGTPGALLENEEAALSQTLAMVREQRVQSVDGVWVPIRAQTVCLHGDGAHALAFARRIRDRLGSEGIAVRAGA.

Belongs to the LamB/PxpA family. In terms of assembly, forms a complex composed of PxpA, PxpB and PxpC.

It catalyses the reaction 5-oxo-L-proline + ATP + 2 H2O = L-glutamate + ADP + phosphate + H(+). In terms of biological role, catalyzes the cleavage of 5-oxoproline to form L-glutamate coupled to the hydrolysis of ATP to ADP and inorganic phosphate. The sequence is that of 5-oxoprolinase subunit A 1 from Ralstonia nicotianae (strain ATCC BAA-1114 / GMI1000) (Ralstonia solanacearum).